An 84-amino-acid polypeptide reads, in one-letter code: U8-theraphotoxin-Hhn1b (84 aa).

An N-terminal signal peptide occupies residues 1 to 21 (MKVVLIVCLVWVMAMMELVSC). 4 disulfide bridges follow: Cys-23/Cys-35, Cys-29/Cys-44, Cys-34/Cys-67, and Cys-54/Cys-75.

It belongs to the AVIT (prokineticin) family. As to expression, expressed by the venom gland.

The protein resides in the secreted. The chain is U8-theraphotoxin-Hhn1b from Cyriopagopus hainanus (Chinese bird spider).